A 265-amino-acid chain; its full sequence is 5'-nucleotidase SurE (265 aa).

4 residues coordinate a divalent metal cation: Asp-8, Asp-9, Ser-41, and Asn-100.

It belongs to the SurE nucleotidase family. A divalent metal cation is required as a cofactor.

It localises to the cytoplasm. The catalysed reaction is a ribonucleoside 5'-phosphate + H2O = a ribonucleoside + phosphate. Nucleotidase that shows phosphatase activity on nucleoside 5'-monophosphates. The polypeptide is 5'-nucleotidase SurE (Brevibacillus brevis (strain 47 / JCM 6285 / NBRC 100599)).